We begin with the raw amino-acid sequence, 329 residues long: Short-chain dehydrogenase/reductase prx4 (329 aa).

The N-terminal stretch at 1-21 (MIPRWQPASIALLLHLDTLRC) is a signal peptide. NADP(+) is bound by residues S58, I60, and N81. A glycan (N-linked (GlcNAc...) asparagine) is linked at N91. NADP(+) is bound by residues D98, N121, K161, Y194, K198, and T229. Catalysis depends on Y194, which acts as the Proton acceptor. The active-site Lowers pKa of active site Tyr is the K198. A helical transmembrane segment spans residues 238-258 (GPLMAAGLPVSSAHMVGLAVV).

This sequence belongs to the short-chain dehydrogenases/reductases (SDR) family.

It is found in the membrane. The protein operates within sesquiterpene biosynthesis. Functionally, short-chain dehydrogenase/reductase; part of the gene cluster that mediates the biosynthesis of PR-toxin, a bicyclic sesquiterpene belonging to the eremophilane class and acting as a mycotoxin. The first step of the pathway is catalyzed by the aristolochene synthase which performs the cyclization of trans,trans-farnesyl diphosphate (FPP) to the bicyclic sesquiterpene aristolochene. Following the formation of aristolochene, the non-oxygenated aristolochene is converted to the trioxygenated intermediate eremofortin B, via 7-epi-neopetasone. This conversion appears to involve three enzymes, a hydroxysterol oxidase-like enzyme, the quinone-oxidase prx3 that forms the quinone-type-structure in the bicyclic nucleus of aristolochene with the C8-oxo group and the C-3 hydroxyl group, and the P450 monooxygenase prx9 that introduces the epoxide at the double bond between carbons 1 and 2. No monoxy or dioxy-intermediates have been reported to be released to the broth, so these three early oxidative reactions may be coupled together. Eremofortin B is further oxidized by another P450 monooxygenase, that introduces a second epoxide between carbons 7 and 11 prior to acetylation to eremofortin A by the acetyltransferase prx11. The second epoxidation may be performed by a second P450 monooxygenase. After the acetylation step, eremofortin A is converted to eremofortin C and then to PR-toxin. First the conversion of eremofortin A to eremofortin C proceeds by oxidation of the side chain of the molecule at C-12 and is catalyzed by the short-chain oxidoreductase prx1. The cytochrome P450 monooxygenase prx8 also plays a role in this step. The primary alcohol formed at C-12 is finally oxidized by the short-chain alcohol dehydrogenase prx4 that forms PR-toxin. This Penicillium rubens (strain ATCC 28089 / DSM 1075 / NRRL 1951 / Wisconsin 54-1255) (Penicillium chrysogenum) protein is Short-chain dehydrogenase/reductase prx4.